The primary structure comprises 149 residues: Putative eggshell protein (149 aa).

6 repeat units span residues 1–5, 6–10, 11–15, 16–20, 21–25, and 26–30. Residues 1–64 form a 13 X 5 AA approximate tandem repeats of Y-G-Y-[DE]-K region; the sequence is YGYDKYGYDK…YGYDKYGDDK (64 aa). A 7; truncated repeat occupies 31–34; that stretch reads GYDK. 3 tandem repeats follow at residues 35-39, 40-44, and 45-49. The 11; approximate repeat unit spans residues 50-54; it reads YGNEK. Copy 12 of the repeat occupies 55 to 59; it reads YGYDK. A 13; approximate repeat occupies 60–64; the sequence is YGDDK. The segment covering 105-124 has biased composition (basic and acidic residues); that stretch reads YRKDHDKHDHDEHDHHDDHH. Residues 105 to 149 are disordered; that stretch reads YRKDHDKHDHDEHDHHDDHHDHRHHHHEHDHHHHHEHDHKNGKGY. Residues 125–141 show a composition bias toward basic residues; sequence DHRHHHHEHDHHHHHEH.

The sequence is that of Putative eggshell protein from Schistosoma mansoni (Blood fluke).